We begin with the raw amino-acid sequence, 493 residues long: MNSMKYRDLRDFLTLLEHKGELKRISFEVDPYLEMTEIADRTLRAGGPALLFENPKGYSMPVLCNLFGTAERVAMGMGQKDVKALHDVGKLLAFLKEPDPPKGFRDLLDKLPKFKQVLNMPTKRLNTAPCQEHVSVGDDVDLTRIPIMHCWPEDAAPLITWGLTVTRGPNKERQNLGIYRQQVLGKNKLIMRWLSHRGGALDFQEWCQAHPGERFPVAVALGADPATILGAVTPIPDTLSEYAFAGLLRGYKTEVVKCLSNNLEVPASAEIVLEGYIEPGELAPEGPYGDHTGYYNEIDMFPVFTVTHITQRHDAIYHSTYTGRPPDEPAVLGVALNEVLVPILQKQFPEIVDFYLPPEGCSYRLAVVTMKKQYPGHAKRVMMGVWSYLRQFMYTKFVIVCDDDINARDWNDVIWAITTRMDPVRDTVLMENTPIDYLDFASPVSGLGSKMGMDATNKWLGETQREWGRPIVMSEEVRTRVDKIWDELDILGP.

Asn-175 is a Mn(2+) binding site. Prenylated FMN-binding positions include 178–180 (IYR), 192–194 (RWL), and 197–198 (RG). Residue Glu-241 participates in Mn(2+) binding. The active-site Proton donor is Asp-290.

The protein belongs to the UbiD family. Homohexamer. Prenylated FMN serves as cofactor. Mn(2+) is required as a cofactor.

It is found in the cell membrane. It carries out the reaction a 4-hydroxy-3-(all-trans-polyprenyl)benzoate + H(+) = a 2-(all-trans-polyprenyl)phenol + CO2. It functions in the pathway cofactor biosynthesis; ubiquinone biosynthesis. Functionally, catalyzes the decarboxylation of 3-octaprenyl-4-hydroxy benzoate to 2-octaprenylphenol, an intermediate step in ubiquinone biosynthesis. This chain is 3-octaprenyl-4-hydroxybenzoate carboxy-lyase, found in Photorhabdus laumondii subsp. laumondii (strain DSM 15139 / CIP 105565 / TT01) (Photorhabdus luminescens subsp. laumondii).